Reading from the N-terminus, the 452-residue chain is MPSDGRECVSIHIGQAGAQIGNACWELYCIEHGLDEAGFLKEEEKNKKQQSLQAFFSESMNGKHVPRAIYVDLEPTVLDEIRNGVYGNLFHPDQIINGKEDAANNYARGHYTIGKELIDVVLDRIRKQTENCEGLQGFLVFHSFGGGTGSGFSSLLMERLSVEFGKKSKLEFSVYPAPQVSTSVVEPYNSILTTHTTLELSDCSFMVDNEAIYDLCRQKLHVERPSYSNLNRLIAQVVSSITASLRFDGALNVDLNEFQTNLVPYPRIHFPLATYAPVISADRAHHEPLSVQDITHMCFEKANQMVKCDPSAGKYMAVCLLYRGDVVPKDVNAAISSVKAKRGINFVDWCPTGFKVGINYQAPITVEGGDLAKVHRAVCMLSNTTAIAEAWARLDHKFDLMYSKRAFVHWFVGEGMEEGEFMEARDDLAALEKDYAEVSRDTADLEEENDEF.

Residues glutamine 15, glutamate 74, serine 143, glycine 147, threonine 148, threonine 182, asparagine 209, and asparagine 231 each contribute to the GTP site. Glutamate 74 serves as a coordination point for Mg(2+). Glutamate 257 is a catalytic residue.

The protein belongs to the tubulin family. Dimer of alpha and beta chains. A typical microtubule is a hollow water-filled tube with an outer diameter of 25 nm and an inner diameter of 15 nM. Alpha-beta heterodimers associate head-to-tail to form protofilaments running lengthwise along the microtubule wall with the beta-tubulin subunit facing the microtubule plus end conferring a structural polarity. Microtubules usually have 13 protofilaments but different protofilament numbers can be found in some organisms and specialized cells. Mg(2+) is required as a cofactor.

The protein resides in the cytoplasm. The protein localises to the cytoskeleton. The enzyme catalyses GTP + H2O = GDP + phosphate + H(+). Functionally, tubulin is the major constituent of microtubules, a cylinder consisting of laterally associated linear protofilaments composed of alpha- and beta-tubulin heterodimers. Microtubules grow by the addition of GTP-tubulin dimers to the microtubule end, where a stabilizing cap forms. Below the cap, tubulin dimers are in GDP-bound state, owing to GTPase activity of alpha-tubulin. The chain is Tubulin alpha-8 chain (tba-8) from Caenorhabditis elegans.